We begin with the raw amino-acid sequence, 1114 residues long: OTU domain-containing protein 4 (1114 aa).

Met1 carries the N-acetylmethionine modification. Positions 1–22 (MEAAVGVPDGGDQGGAGPREDA) are disordered. Positions 8–17 (PDGGDQGGAG) are enriched in gly residues. One can recognise an OTU domain in the interval 34 to 155 (LYRKLVAKDG…GNHYDIVYPI (122 aa)). The segment at 39-45 (VAKDGSC) is cys-loop. Residue Asp42 is part of the active site. Cys45 acts as the Nucleophile in catalysis. The variable-loop stretch occupies residues 94-104 (LENPQEWVGQV). Tyr120 is subject to Phosphotyrosine. 2 positions are modified to phosphoserine: Ser126 and Ser128. Thr131 is subject to Phosphothreonine. Residues 143 to 148 (FSNGNH) are his-loop. His148 is a catalytic residue. Residues Ser166, Ser199, Ser202, Ser204, and Ser341 each carry the phosphoserine modification. A disordered region spans residues 323–449 (KHTSKNLKAP…FGLSPEERRE (127 aa)). Over residues 392–404 (FSSHSSGSQSQKF) the composition is skewed to low complexity. Basic and acidic residues predominate over residues 420 to 435 (RKPDRERVEDFDHTSR). Tyr439 is subject to Phosphotyrosine. Position 443 is a phosphoserine (Ser443). Phosphotyrosine is present on Tyr460. The interval 472–567 (ALSSSSVNQS…PAEQKPAEHV (96 aa)) is disordered. Residues 474 to 487 (SSSSVNQSASQSSN) show a composition bias toward low complexity. The span at 496–529 (HVGDRKGSRRRMDTEERKDKDSIHGHSQLDKRPE) shows a compositional bias: basic and acidic residues. Residues Ser546, Ser893, and Ser900 each carry the phosphoserine modification. A disordered region spans residues 911–1114 (EFPEARGEHV…MGDGHRGQHT (204 aa)). Basic and acidic residues-rich tracts occupy residues 913–922 (PEARGEHVHS) and 969–1000 (NRERETVPVELEPKRTIQSLKEKTEKVKDPKT). Phosphoserine occurs at positions 1006, 1011, 1014, 1023, and 1024. Polar residues predominate over residues 1039-1048 (SKQFYNQTYG). Position 1049 is a phosphoserine (Ser1049). Composition is skewed to basic and acidic residues over residues 1067-1086 (VRSEESWKGQPSRSRDEGYQ) and 1096-1114 (FRGDRRRSGMGDGHRGQHT).

As to quaternary structure, interacts with MYD88; the interaction is direct. Interacts with ALKBH3; the interaction is direct. Interacts with USP7; the interaction is direct. Interacts with USP9X; the interaction is direct. In terms of processing, phosphorylated on Ser-202 and Ser-204 likely by CSNK2A1-CSNK2A2 serine/threonine-protein kinase complex. Activates 'Lys-63'-specific deubiquitinase activity.

The protein localises to the cytoplasm. The protein resides in the nucleus. The catalysed reaction is Thiol-dependent hydrolysis of ester, thioester, amide, peptide and isopeptide bonds formed by the C-terminal Gly of ubiquitin (a 76-residue protein attached to proteins as an intracellular targeting signal).. With respect to regulation, phosphorylation on Ser-202 and Ser-204 induces 'Lys-63'-specific deubiquitinase activity. Deubiquitinase which hydrolyzes the isopeptide bond between the ubiquitin C-terminus and the lysine epsilon-amino group of the target protein. May negatively regulate inflammatory and pathogen recognition signaling in innate immune response. Upon phosphorylation at Ser-202 and Ser-204 residues, via IL-1 receptor and Toll-like receptor signaling pathway, specifically deubiquitinates 'Lys-63'-polyubiquitinated MYD88 adapter protein triggering down-regulation of NF-kappa-B-dependent transcription of inflammatory mediators. Independently of the catalytic activity, acts as a scaffold for alternative deubiquitinases to assemble specific deubiquitinase-substrate complexes. Associates with USP7 and USP9X deubiquitinases to stabilize alkylation repair enzyme ALKBH3, thereby promoting the repair of alkylated DNA lesions. The protein is OTU domain-containing protein 4 of Homo sapiens (Human).